The following is a 475-amino-acid chain: Aspartyl/glutamyl-tRNA(Asn/Gln) amidotransferase subunit B (475 aa).

Belongs to the GatB/GatE family. GatB subfamily. In terms of assembly, heterotrimer of A, B and C subunits.

The catalysed reaction is L-glutamyl-tRNA(Gln) + L-glutamine + ATP + H2O = L-glutaminyl-tRNA(Gln) + L-glutamate + ADP + phosphate + H(+). The enzyme catalyses L-aspartyl-tRNA(Asn) + L-glutamine + ATP + H2O = L-asparaginyl-tRNA(Asn) + L-glutamate + ADP + phosphate + 2 H(+). Its function is as follows. Allows the formation of correctly charged Asn-tRNA(Asn) or Gln-tRNA(Gln) through the transamidation of misacylated Asp-tRNA(Asn) or Glu-tRNA(Gln) in organisms which lack either or both of asparaginyl-tRNA or glutaminyl-tRNA synthetases. The reaction takes place in the presence of glutamine and ATP through an activated phospho-Asp-tRNA(Asn) or phospho-Glu-tRNA(Gln). This chain is Aspartyl/glutamyl-tRNA(Asn/Gln) amidotransferase subunit B, found in Helicobacter pylori (strain HPAG1).